A 443-amino-acid chain; its full sequence is Protoheme IX farnesyltransferase, mitochondrial (443 aa).

7 consecutive transmembrane segments (helical) span residues 174–194, 235–255, 257–277, 280–300, 309–329, 364–384, and 411–431; these read AAGFALAPGPFDWPCFLLTSV, LAVSFATCCAVPGVAILTLGV, PLTGALGLFNIFLYTCCYTPL, ISIANTWVGAVVGAIPPVMGW, AGAFLLGGILYSWQFPHFNAL, LLVLSAAAPVLDITTWTFPIM, and LFFCSLWHLPLLLLLMLTCKR.

The protein belongs to the UbiA prenyltransferase family.

Its subcellular location is the mitochondrion membrane. The catalysed reaction is heme b + (2E,6E)-farnesyl diphosphate + H2O = Fe(II)-heme o + diphosphate. Its function is as follows. Converts protoheme IX and farnesyl diphosphate to heme O. This chain is Protoheme IX farnesyltransferase, mitochondrial (COX10), found in Homo sapiens (Human).